The primary structure comprises 219 residues: MSKQAEEEQLAFLDSGRIIGIINQLKESEDPEKIVTIQIQVNLKGFDPRKDNKVSKDMVLPYRVRSLDKTIVIADEAHVKVCIDANLPYVPIDEISGDDKKDIRESVLKKNKFFILCPGYNKIYQLKNILRCGKTPHILRNGDDINAVFETGKKSCKLRIQDDFSVTSFTVGHTGMDSEHIYENIKVGMGLLVSYLKNGSQNLKGVMIKTDQSPPVTLY.

It belongs to the universal ribosomal protein uL1 family. In terms of assembly, component of the large ribosomal subunit.

The protein localises to the cytoplasm. This chain is Large ribosomal subunit protein uL1 (RPL1), found in Encephalitozoon cuniculi (strain GB-M1) (Microsporidian parasite).